The primary structure comprises 628 residues: Probable potassium transport system protein Kup (628 aa).

A run of 12 helical transmembrane segments spans residues 20 to 40 (ALLTLGALGVVFGDIGTSPLY), 63 to 83 (IISMVLWTITLIVTVKYVMLV), 110 to 130 (FVAVAGMLGAALFYGDVVITP), 151 to 171 (FILPISLAVLIAIFAIQPLGT), 178 to 198 (FGPIMLLWFVTLAGLGIPQII), 212 to 232 (ALGLIVAEPFQAFVLLGAVVL), 256 to 276 (WFCVVMPALILTYLGQGALVI), 296 to 316 (IPLVILATIATVIASQAVISG), 346 to 366 (IYMPLVNGLLFVSVMVVVLVF), 375 to 395 (AYGLAVTGTLVLVSVLYLIYV), 398 to 418 (TWWKTALFIVFIGIPEVLLFA), and 422 to 442 (TKIHDGGWLPLLTAAVLIVVM).

The protein belongs to the HAK/KUP transporter (TC 2.A.72) family.

Its subcellular location is the cell membrane. It carries out the reaction K(+)(in) + H(+)(in) = K(+)(out) + H(+)(out). In terms of biological role, transport of potassium into the cell. Likely operates as a K(+):H(+) symporter. The polypeptide is Probable potassium transport system protein Kup (Corynebacterium glutamicum (strain R)).